The following is a 1203-amino-acid chain: Kinesin-like protein KIN-14Q (1203 aa).

A disordered region spans residues 1–28 (MEDCCDPLLATDASPRPESFSRSEKDIA). Residues 19–28 (SFSRSEKDIA) show a composition bias toward basic and acidic residues. A coiled-coil region spans residues 336–395 (ENLVCRAEEEAEGMRSDCEQQRKEMEDMKRMVEELKLENQQKTRECEEALNSLSEIQNEL). The region spanning 499-825 (NIRVFCRCRP…LNFASRVRGI (327 aa)) is the Kinesin motor domain. Residue 582–589 (GQTGTGKT) coordinates ATP. Residues 846 to 901 (VEKWKQDMKGKDEQIRKMEETMYGLEAKIKERDTKNKTLQDKVKELESQLLVERKL) are a coiled coil. The disordered stretch occupies residues 907 to 931 (DTKIAEQQTKQQTEDENNTSKRPPL).

Belongs to the TRAFAC class myosin-kinesin ATPase superfamily. Kinesin family. KIN-14 subfamily.

This is Kinesin-like protein KIN-14Q from Arabidopsis thaliana (Mouse-ear cress).